Reading from the N-terminus, the 514-residue chain is MKRCALLTPLLPLALACNNPNDPAHSCASIYSVSSDEAASFCATFTASVVSEPTGVPDAFLSACDSKIKHLSSACSCLGPVDSATATPVPATSTVPASVPVITTSTATATPSRIPVFVPSSSSSSAVVTFKTQIKSSSPGPSSSFAAAATTEAPTSTRASPYTPYTGNGGTTCTVTDYAGISSAVASCSNIMLSDVYAPPSSTIDLQDLQTGAAVIFAGKTTFGDTSDSDFDPIVISGTNLTITGTEDHVIDGNGQAYWDGQGSNGGSDKPDHFIVLKHVYNSVVANLNIQNWPVHCFDIENTESLTLTGITLDNSAGDEPNDSSDGDPAAHNSDGFDIKSSTDLILKDSNVYNQDDCVAITSGTNITVDNMYCSGGHGLSIGSIGGKSDNTVDGVVFSNSQVVNSQNGCRIKTNEGETGEVSNIKYENISLSGISKYGIVVQQDYLNGGPTGEPSNGVSITNVEFTDVTGTMSGGKDYYILCGDGSCENFTFSGVSITGGSDDSCNYPDSGCP.

An N-terminal signal peptide occupies residues 1 to 16 (MKRCALLTPLLPLALA). A disordered region spans residues 134–166 (IKSSSPGPSSSFAAAATTEAPTSTRASPYTPYT). Low complexity predominate over residues 136–166 (SSSPGPSSSFAAAATTEAPTSTRASPYTPYT). A disulfide bridge links Cys173 with Cys188. A glycan (N-linked (GlcNAc...) asparagine) is linked at Asn240. 7 PbH1 repeats span residues 280-302 (VYNSVVANLNIQNWPVHCFDIEN), 303-341 (TESLTLTGITLDNSAGDEPNDSSDGDPAAHNSDGFDIKS), 342-363 (STDLILKDSNVYNQDDCVAITS), 364-384 (GTNITVDNMYCSGGHGLSIGS), 393-414 (VDGVVFSNSQVVNSQNGCRIKT), 422-444 (VSNIKYENISLSGISKYGIVVQQ), and 456-500 (SNGV…SITG). Residues 312–335 (TLDNSAGDEPNDSSDGDPAAHNSD) are disordered. Residue Asn322 is glycosylated (N-linked (GlcNAc...) asparagine). The active-site Proton donor is the Asp356. Cys358 and Cys374 are oxidised to a cystine. Asn366 carries N-linked (GlcNAc...) asparagine glycosylation. His378 is a catalytic residue. The N-linked (GlcNAc...) asparagine glycan is linked to Asn429. Cys483 and Cys488 are joined by a disulfide. A glycan (N-linked (GlcNAc...) asparagine) is linked at Asn490. Cys506 and Cys513 are disulfide-bonded.

This sequence belongs to the glycosyl hydrolase 28 family.

The protein resides in the secreted. The enzyme catalyses (1,4-alpha-D-galacturonosyl)n+m + H2O = (1,4-alpha-D-galacturonosyl)n + (1,4-alpha-D-galacturonosyl)m.. Its function is as follows. Involved in maceration and soft-rotting of plant tissue. Hydrolyzes the 1,4-alpha glycosidic bonds of de-esterified pectate in the smooth region of the plant cell wall. The sequence is that of Probable endopolygalacturonase D (pgaD) from Emericella nidulans (strain FGSC A4 / ATCC 38163 / CBS 112.46 / NRRL 194 / M139) (Aspergillus nidulans).